Consider the following 770-residue polypeptide: uncharacterized protein (770 aa).

Residues 736–770 (GSGQPGQSPANVGDDPNRMVQSSASQTQIGHVFNN) form a disordered region. Polar residues predominate over residues 754–770 (MVQSSASQTQIGHVFNN).

This is an uncharacterized protein from Caenorhabditis elegans.